Consider the following 57-residue polypeptide: Sperm histone (57 aa).

The tract at residues 1-57 (MARYRRTRTRSRSRRRRRSRRRRSSRRRRYGRSRRSYRSVGRRRRRYGRRRRRRRRY) is disordered. A Phosphothreonine modification is found at Thr-9.

It belongs to the protamine P1 family. As to expression, testis.

The protein localises to the nucleus. Its subcellular location is the chromosome. In terms of biological role, protamines substitute for histones in the chromatin of sperm during the haploid phase of spermatogenesis. They compact sperm DNA into a highly condensed, stable and inactive complex. This Coturnix japonica (Japanese quail) protein is Sperm histone.